A 311-amino-acid chain; its full sequence is Biotin synthase (311 aa).

A Radical SAM core domain is found at 32–258; sequence NGVQFCQLLN…LFPLSRIRLA (227 aa). Cysteine 47, cysteine 51, and cysteine 54 together coordinate [4Fe-4S] cluster. [2Fe-2S] cluster-binding residues include cysteine 91, cysteine 124, cysteine 184, and arginine 256.

It belongs to the radical SAM superfamily. Biotin synthase family. Homodimer. The cofactor is [4Fe-4S] cluster. [2Fe-2S] cluster serves as cofactor.

The enzyme catalyses (4R,5S)-dethiobiotin + (sulfur carrier)-SH + 2 reduced [2Fe-2S]-[ferredoxin] + 2 S-adenosyl-L-methionine = (sulfur carrier)-H + biotin + 2 5'-deoxyadenosine + 2 L-methionine + 2 oxidized [2Fe-2S]-[ferredoxin]. The protein operates within cofactor biosynthesis; biotin biosynthesis; biotin from 7,8-diaminononanoate: step 2/2. In terms of biological role, catalyzes the conversion of dethiobiotin (DTB) to biotin by the insertion of a sulfur atom into dethiobiotin via a radical-based mechanism. The sequence is that of Biotin synthase from Methylacidiphilum infernorum (isolate V4) (Methylokorus infernorum (strain V4)).